Here is a 322-residue protein sequence, read N- to C-terminus: MLNSFKLSLQYILPKLWLTRLAGWGASKRAGWLTKLVIDLFVKYYKVDMKEAQKPDTASYRTFNEFFVRPLRDEVRPIDTDPNVLVMPADGVISQLGKIEEDKILQAKGHNYSLEALLAGNYLMADLFRNGTFVTTYLSPRDYHRVHMPCNGILREMIYVPGDLFSVNHLTAQNVPNLFARNERVICLFDTEFGPMAQILVGATIVGSIETVWAGTITPPREGIIKRWTWPAGENDGSVALLKGQEMGRFKLGSTVINLFAPGKVNLVEQLESLSVTKIGQPLAVSTETFVTPDSEPAPLPAEEIEAEHDASPLVDDKKDQV.

Catalysis depends on charge relay system; for autoendoproteolytic cleavage activity residues Asp-90, His-147, and Ser-254. Ser-254 acts as the Schiff-base intermediate with substrate; via pyruvic acid; for decarboxylase activity in catalysis. The residue at position 254 (Ser-254) is a Pyruvic acid (Ser); by autocatalysis. A disordered region spans residues 290–322 (FVTPDSEPAPLPAEEIEAEHDASPLVDDKKDQV). Residues 308-322 (EHDASPLVDDKKDQV) show a composition bias toward basic and acidic residues.

It belongs to the phosphatidylserine decarboxylase family. PSD-B subfamily. Prokaryotic type I sub-subfamily. In terms of assembly, heterodimer of a large membrane-associated beta subunit and a small pyruvoyl-containing alpha subunit. Pyruvate is required as a cofactor. In terms of processing, is synthesized initially as an inactive proenzyme. Formation of the active enzyme involves a self-maturation process in which the active site pyruvoyl group is generated from an internal serine residue via an autocatalytic post-translational modification. Two non-identical subunits are generated from the proenzyme in this reaction, and the pyruvate is formed at the N-terminus of the alpha chain, which is derived from the carboxyl end of the proenzyme. The autoendoproteolytic cleavage occurs by a canonical serine protease mechanism, in which the side chain hydroxyl group of the serine supplies its oxygen atom to form the C-terminus of the beta chain, while the remainder of the serine residue undergoes an oxidative deamination to produce ammonia and the pyruvoyl prosthetic group on the alpha chain. During this reaction, the Ser that is part of the protease active site of the proenzyme becomes the pyruvoyl prosthetic group, which constitutes an essential element of the active site of the mature decarboxylase.

The protein localises to the cell membrane. It catalyses the reaction a 1,2-diacyl-sn-glycero-3-phospho-L-serine + H(+) = a 1,2-diacyl-sn-glycero-3-phosphoethanolamine + CO2. The protein operates within phospholipid metabolism; phosphatidylethanolamine biosynthesis; phosphatidylethanolamine from CDP-diacylglycerol: step 2/2. Its function is as follows. Catalyzes the formation of phosphatidylethanolamine (PtdEtn) from phosphatidylserine (PtdSer). The sequence is that of Phosphatidylserine decarboxylase proenzyme from Escherichia fergusonii (strain ATCC 35469 / DSM 13698 / CCUG 18766 / IAM 14443 / JCM 21226 / LMG 7866 / NBRC 102419 / NCTC 12128 / CDC 0568-73).